A 293-amino-acid polypeptide reads, in one-letter code: uncharacterized protein (293 aa).

To M.jannaschii MJ1614 and MJ0008.

This is an uncharacterized protein from Methanocaldococcus jannaschii (strain ATCC 43067 / DSM 2661 / JAL-1 / JCM 10045 / NBRC 100440) (Methanococcus jannaschii).